The sequence spans 380 residues: Cytochrome b (380 aa).

A run of 4 helical transmembrane segments spans residues 33 to 53 (FGSLLGLCLVTQIATGLFLAM), 77 to 98 (WLIRSIHANGASFFFICIYLHI), 113 to 133 (WTIGVVLLLLVMMTAFVGYVL), and 178 to 198 (FFAFHFLFPFIIAAATVIHLL). The heme b site is built by His83 and His97. Heme b contacts are provided by His182 and His196. His201 contributes to the a ubiquinone binding site. The next 4 membrane-spanning stretches (helical) occupy residues 226 to 246 (YKDLLGFAVLLTALASLALFS), 288 to 308 (LGGVLALLFSILVLMLVPFLH), 320 to 340 (VTQFLFWSLVADVMILTWIGG), and 347 to 367 (FVIIGQVASLIYFSLFLVLIP).

It belongs to the cytochrome b family. In terms of assembly, the cytochrome bc1 complex contains 3 respiratory subunits (MT-CYB, CYC1 and UQCRFS1), 2 core proteins (UQCRC1 and UQCRC2) and probably 6 low-molecular weight proteins. The cofactor is heme b.

The protein localises to the mitochondrion inner membrane. Component of the ubiquinol-cytochrome c reductase complex (complex III or cytochrome b-c1 complex) that is part of the mitochondrial respiratory chain. The b-c1 complex mediates electron transfer from ubiquinol to cytochrome c. Contributes to the generation of a proton gradient across the mitochondrial membrane that is then used for ATP synthesis. The chain is Cytochrome b (mt-cyb) from Kareius bicoloratus (Stone flounder).